The sequence spans 327 residues: Glutaminase (327 aa).

6 residues coordinate substrate: Ser-92, Asn-143, Asn-195, Tyr-218, Tyr-263, and Val-281.

The protein belongs to the glutaminase family. In terms of assembly, homotetramer.

The enzyme catalyses L-glutamine + H2O = L-glutamate + NH4(+). This is Glutaminase from Synechocystis sp. (strain ATCC 27184 / PCC 6803 / Kazusa).